The primary structure comprises 115 residues: UPF0102 protein Kole_1919 (115 aa).

This sequence belongs to the UPF0102 family.

This is UPF0102 protein Kole_1919 from Kosmotoga olearia (strain ATCC BAA-1733 / DSM 21960 / TBF 19.5.1).